Reading from the N-terminus, the 243-residue chain is Uridylate kinase (243 aa).

Residue 12 to 15 participates in ATP binding; it reads KLSG. The tract at residues 20–25 is involved in allosteric activation by GTP; sequence GPGGSG. Gly56 is a binding site for UMP. Gly57 and Arg61 together coordinate ATP. Residues Asp76 and 137 to 144 each bind UMP; that span reads TGSPYFST. Asn165, Tyr171, and Asp174 together coordinate ATP.

Belongs to the UMP kinase family. Homohexamer.

It localises to the cytoplasm. The catalysed reaction is UMP + ATP = UDP + ADP. It participates in pyrimidine metabolism; CTP biosynthesis via de novo pathway; UDP from UMP (UMPK route): step 1/1. Allosterically activated by GTP. Inhibited by UTP. Functionally, catalyzes the reversible phosphorylation of UMP to UDP. This Oenococcus oeni (strain ATCC BAA-331 / PSU-1) protein is Uridylate kinase.